A 331-amino-acid chain; its full sequence is Phenylalanine--tRNA ligase alpha subunit (331 aa).

E254 serves as a coordination point for Mg(2+).

This sequence belongs to the class-II aminoacyl-tRNA synthetase family. Phe-tRNA synthetase alpha subunit type 1 subfamily. Tetramer of two alpha and two beta subunits. Mg(2+) serves as cofactor.

Its subcellular location is the cytoplasm. It carries out the reaction tRNA(Phe) + L-phenylalanine + ATP = L-phenylalanyl-tRNA(Phe) + AMP + diphosphate + H(+). The sequence is that of Phenylalanine--tRNA ligase alpha subunit from Blochmanniella pennsylvanica (strain BPEN).